Here is a 482-residue protein sequence, read N- to C-terminus: MSVIQELHRQLVRKERSATEITQAYLDRIAQVEPTLHSFLTVTRDRALAQAAEVDKRLAAGEEIGLLTGIPLAIKDNLCTYGVRTTCASKMLEHFVPPYESTVTEKLQAAGAIMVGKTNLDEFAMGSSTENSAFGFTANPWNPERVSGGSSGGSAAAVAARECAAALGSDTGGSIRQPAAFCGVVGLKPTYGLVSRYGLVAYASSLDQIGPLAPTVTDAAILLGAIAGHDPKDATSLRVPIPDYTQALKPDLKGMRIGLIQETVGEGVQPEVKSALEAALKTLEALGATLVELSCPRFAYGLPTYYIIAPSEASANLARYDGVNFGFRAEGASDLLEMYMKTRAQGFGAEVKRRIMIGTYALSAGYYDAYYLRAQKVRTLIKEDFARAFEQVDVLICPTAPTTAFKAGEKTADPLSMYLSDLMTIPVNLAGLPGLSVPCGFDSNGLPIGLQLIGNVLQEATLFHVAYAYEQTTPWHQQQPQL.

Catalysis depends on charge relay system residues Lys-75 and Ser-150. Residue Ser-174 is the Acyl-ester intermediate of the active site.

The protein belongs to the amidase family. GatA subfamily. Heterotrimer of A, B and C subunits.

The enzyme catalyses L-glutamyl-tRNA(Gln) + L-glutamine + ATP + H2O = L-glutaminyl-tRNA(Gln) + L-glutamate + ADP + phosphate + H(+). Allows the formation of correctly charged Gln-tRNA(Gln) through the transamidation of misacylated Glu-tRNA(Gln) in organisms which lack glutaminyl-tRNA synthetase. The reaction takes place in the presence of glutamine and ATP through an activated gamma-phospho-Glu-tRNA(Gln). This is Glutamyl-tRNA(Gln) amidotransferase subunit A from Thermosynechococcus vestitus (strain NIES-2133 / IAM M-273 / BP-1).